We begin with the raw amino-acid sequence, 470 residues long: Coproporphyrinogen III oxidase (470 aa).

FAD is bound by residues 12 to 17 (GGGITG), 41 to 42 (EA), Lys49, 63 to 66 (GPDS), Val256, Trp409, and 448 to 450 (VGI).

This sequence belongs to the protoporphyrinogen/coproporphyrinogen oxidase family. Coproporphyrinogen III oxidase subfamily. As to quaternary structure, monomer. The cofactor is FAD.

It is found in the cytoplasm. The protein resides in the cell membrane. The catalysed reaction is coproporphyrinogen III + 3 O2 = coproporphyrin III + 3 H2O2. The protein operates within porphyrin-containing compound metabolism; protoheme biosynthesis. Its activity is regulated as follows. Only weakly inhibited by acifluorfen, in contrast to eukaryotic family members. Weakly inhibited by methylacifluorfen. Bilirubin, biliverdin and hemin are all competitive inhibitors. Involved in coproporphyrin-dependent heme b biosynthesis. Catalyzes the oxidation of coproporphyrinogen III to coproporphyrin III. Can also oxidize protoporphyrinogen IX to protoporphyrin-IX. The specific activity for the oxidation of coproporphyrinogen III is much higher than that for the oxidation of protoporphyrinogen IX. Can also oxidize mesoporphyrinogen IX, but not uroporphyrinogen III. This chain is Coproporphyrinogen III oxidase, found in Bacillus subtilis (strain 168).